We begin with the raw amino-acid sequence, 573 residues long: Leucine aminopeptidase, chloroplastic (573 aa).

The transit peptide at 1-53 directs the protein to the chloroplast; the sequence is MATLRVSSLLASSPSSLHCNPSVFTKCQSSPRWAFSFSVTPLCSRRSKRIVHC. Mn(2+)-binding residues include K342 and D347. K354 is an active-site residue. Mn(2+) is bound by residues D367, D427, and E429. R431 is an active-site residue.

Belongs to the peptidase M17 family. Homohexamer (dimer of homotrimers). Mn(2+) is required as a cofactor. As to expression, in tubers and floral buds of untreated plants. After abscisic acid (ABA) treatment or mechanical wounding is mostly accumulated in leaves, to a lesser extent in stems, but not in roots.

It localises to the plastid. The protein resides in the chloroplast. The catalysed reaction is Release of an N-terminal amino acid, Xaa-|-Yaa-, in which Xaa is preferably Leu, but may be other amino acids including Pro although not Arg or Lys, and Yaa may be Pro. Amino acid amides and methyl esters are also readily hydrolyzed, but rates on arylamides are exceedingly low.. The enzyme catalyses Release of N-terminal proline from a peptide.. In terms of biological role, presumably involved in the processing and regular turnover of intracellular proteins. The polypeptide is Leucine aminopeptidase, chloroplastic (LAP) (Solanum tuberosum (Potato)).